The sequence spans 370 residues: Phospho-N-acetylmuramoyl-pentapeptide-transferase (370 aa).

10 helical membrane passes run alanine 29–leucine 49, glycine 70–tryptophan 90, leucine 93–phenylalanine 113, lysine 133–glycine 153, glycine 177–serine 197, glycine 209–serine 229, valine 251–alanine 271, valine 273–methionine 293, isoleucine 298–valine 318, and valine 349–isoleucine 369.

Belongs to the glycosyltransferase 4 family. MraY subfamily. Mg(2+) is required as a cofactor.

Its subcellular location is the cell inner membrane. The catalysed reaction is UDP-N-acetyl-alpha-D-muramoyl-L-alanyl-gamma-D-glutamyl-meso-2,6-diaminopimeloyl-D-alanyl-D-alanine + di-trans,octa-cis-undecaprenyl phosphate = di-trans,octa-cis-undecaprenyl diphospho-N-acetyl-alpha-D-muramoyl-L-alanyl-D-glutamyl-meso-2,6-diaminopimeloyl-D-alanyl-D-alanine + UMP. Its pathway is cell wall biogenesis; peptidoglycan biosynthesis. Functionally, catalyzes the initial step of the lipid cycle reactions in the biosynthesis of the cell wall peptidoglycan: transfers peptidoglycan precursor phospho-MurNAc-pentapeptide from UDP-MurNAc-pentapeptide onto the lipid carrier undecaprenyl phosphate, yielding undecaprenyl-pyrophosphoryl-MurNAc-pentapeptide, known as lipid I. In Leptospira biflexa serovar Patoc (strain Patoc 1 / Ames), this protein is Phospho-N-acetylmuramoyl-pentapeptide-transferase.